We begin with the raw amino-acid sequence, 625 residues long: Chaperone protein HtpG (625 aa).

The segment at 1–337 (MNIQKKEVYS…SNNLPLNVSR (337 aa)) is a; substrate-binding. The tract at residues 338–552 (EILQDNSITQ…SNEMSTQMAK (215 aa)) is b. Positions 553 to 625 (LFSAAGQSVP…ARTNKLILEQ (73 aa)) are c.

This sequence belongs to the heat shock protein 90 family. In terms of assembly, homodimer.

The protein resides in the cytoplasm. Its function is as follows. Molecular chaperone. Has ATPase activity. This chain is Chaperone protein HtpG, found in Buchnera aphidicola subsp. Schizaphis graminum (strain Sg).